A 457-amino-acid chain; its full sequence is tRNA modification GTPase MnmE (457 aa).

Residues Arg22, Glu85, and Arg124 each coordinate (6S)-5-formyl-5,6,7,8-tetrahydrofolate. The 160-residue stretch at Gly219–Leu378 folds into the TrmE-type G domain. Asn229 is a K(+) binding site. GTP is bound by residues Asn229 to Ser234, Thr248 to Thr254, Asp273 to Gly276, and Asn333 to Asp336. Residue Ser233 participates in Mg(2+) binding. Residues Thr248, Val250, and Thr253 each coordinate K(+). Thr254 serves as a coordination point for Mg(2+). Lys457 contacts (6S)-5-formyl-5,6,7,8-tetrahydrofolate.

It belongs to the TRAFAC class TrmE-Era-EngA-EngB-Septin-like GTPase superfamily. TrmE GTPase family. Homodimer. Heterotetramer of two MnmE and two MnmG subunits. It depends on K(+) as a cofactor.

The protein resides in the cytoplasm. Its function is as follows. Exhibits a very high intrinsic GTPase hydrolysis rate. Involved in the addition of a carboxymethylaminomethyl (cmnm) group at the wobble position (U34) of certain tRNAs, forming tRNA-cmnm(5)s(2)U34. The protein is tRNA modification GTPase MnmE of Syntrophus aciditrophicus (strain SB).